The sequence spans 193 residues: Ribose 1,5-bisphosphate phosphokinase PhnN (193 aa).

9–16 (GPSGAGKD) is an ATP binding site.

This sequence belongs to the ribose 1,5-bisphosphokinase family.

The catalysed reaction is alpha-D-ribose 1,5-bisphosphate + ATP = 5-phospho-alpha-D-ribose 1-diphosphate + ADP. Its pathway is metabolic intermediate biosynthesis; 5-phospho-alpha-D-ribose 1-diphosphate biosynthesis; 5-phospho-alpha-D-ribose 1-diphosphate from D-ribose 5-phosphate (route II): step 3/3. Its function is as follows. Catalyzes the phosphorylation of ribose 1,5-bisphosphate to 5-phospho-D-ribosyl alpha-1-diphosphate (PRPP). The chain is Ribose 1,5-bisphosphate phosphokinase PhnN from Yersinia pestis.